The chain runs to 514 residues: Carboxysome shell carbonic anhydrase (514 aa).

Positions 1–27 (MAYRNRNLASQTQRPLAPTAPRRRPVV) are disordered. Cysteine 175 contacts Zn(2+). Aspartate 177 functions as the Proton acceptor in the catalytic mechanism. Zn(2+) contacts are provided by histidine 243 and cysteine 254.

It belongs to the beta-class carbonic anhydrase family. CsoSCA subfamily. Homodimer. Zn(2+) is required as a cofactor.

Its subcellular location is the carboxysome. It catalyses the reaction hydrogencarbonate + H(+) = CO2 + H2O. Its function is as follows. Reversible hydration of carbon dioxide. Essential for photosynthetic carbon dioxide fixation, supplies CO(2) to RuBisCO (ribulose bisphosphate carboxylase, cbbL-cbbS) in the carboxysome. The protein is Carboxysome shell carbonic anhydrase of Prochlorococcus marinus (strain MIT 9313).